The primary structure comprises 1939 residues: Myosin-1 (1939 aa).

The Myosin N-terminal SH3-like domain maps to Asp-33–Pro-82. 2 positions are modified to phosphothreonine: Thr-64 and Thr-69. The 697-residue stretch at Asp-86–Asp-782 folds into the Myosin motor domain. An N6,N6,N6-trimethyllysine modification is found at Lys-130. Gly-179–Thr-186 contacts ATP. The residue at position 389 (Tyr-389) is a Phosphotyrosine. Ser-392 bears the Phosphoserine mark. At Thr-419 the chain carries Phosphothreonine. Residue Tyr-424 is modified to Phosphotyrosine. Ser-625 is subject to Phosphoserine. The interval Leu-659–Glu-681 is actin-binding. His-757 is subject to Pros-methylhistidine. The interval Lys-761–Gly-775 is actin-binding. Positions Leu-785–Ser-814 constitute an IQ domain. Positions Leu-843–Glu-1939 form a coiled coil. A phosphoserine mark is found at Ser-1092 and Ser-1096. 2 disordered regions span residues Glu-1125–Leu-1147 and Arg-1153–Glu-1172. The span at Ala-1128 to Leu-1147 shows a compositional bias: basic and acidic residues. Phosphoserine occurs at positions 1162 and 1237. Position 1241 is a phosphothreonine (Thr-1241). Position 1243 is a phosphoserine (Ser-1243). The residue at position 1255 (Thr-1255) is a Phosphothreonine. Ser-1261 carries the phosphoserine modification. A phosphothreonine mark is found at Thr-1265 and Thr-1286. Residues Ser-1288, Ser-1292, Ser-1303, and Ser-1306 each carry the phosphoserine modification. The residue at position 1464 (Tyr-1464) is a Phosphotyrosine. Thr-1467 bears the Phosphothreonine mark. Ser-1474 is modified (phosphoserine). Tyr-1492 bears the Phosphotyrosine mark. A Phosphoserine modification is found at Ser-1495. Residue Thr-1501 is modified to Phosphothreonine. Ser-1514 carries the phosphoserine modification. Thr-1517 bears the Phosphothreonine mark. A phosphoserine mark is found at Ser-1554, Ser-1574, Ser-1600, Ser-1603, Ser-1714, and Ser-1726. Thr-1730 and Thr-1736 each carry phosphothreonine. Residue Ser-1739 is modified to Phosphoserine.

It belongs to the TRAFAC class myosin-kinesin ATPase superfamily. Myosin family. Muscle myosin is a hexameric protein that consists of 2 heavy chain subunits (MHC), 2 alkali light chain subunits (MLC) and 2 regulatory light chain subunits (MLC-2). Interacts with SLC26A5.

It is found in the cytoplasm. The protein localises to the myofibril. Functionally, required for normal hearing. It plays a role in cochlear amplification of auditory stimuli, likely through the positive regulation of prestin (SLC26A5) activity and outer hair cell (OHC) electromotility. The protein is Myosin-1 (MYH1) of Canis lupus familiaris (Dog).